A 222-amino-acid chain; its full sequence is Flagellar L-ring protein (222 aa).

An N-terminal signal peptide occupies residues 1-18 (MKTTRAIAMLGLLLGLAA). C19 is lipidated: N-palmitoyl cysteine. Residue C19 is the site of S-diacylglycerol cysteine attachment.

Belongs to the FlgH family. In terms of assembly, the basal body constitutes a major portion of the flagellar organelle and consists of four rings (L,P,S, and M) mounted on a central rod.

Its subcellular location is the cell outer membrane. It is found in the bacterial flagellum basal body. Assembles around the rod to form the L-ring and probably protects the motor/basal body from shearing forces during rotation. The protein is Flagellar L-ring protein of Thiobacillus denitrificans (strain ATCC 25259 / T1).